Reading from the N-terminus, the 608-residue chain is Protein Spindly (608 aa).

Met-1 is subject to N-acetylmethionine. Positions 1–445 (MEADITNLRN…LKLKYEPEER (445 aa)) form a coiled coil. The tract at residues 465–487 (PEETEETAAASATEDGVSRLPPH) is disordered. 3 positions are modified to phosphoserine: Ser-516, Ser-518, and Ser-558.

Belongs to the Spindly family. As to quaternary structure, interacts with KNTC1 and ZW10. These interactions appear weak and may be transient or indirect. Interacts with dynein intermediate chain and dynactin (DCTN1). Interacts with the catalytically active form of USP45. Monoubiquitinated with'Lys-48' linkage. Deubiquitinated by USP45.

Its subcellular location is the cytoplasm. It is found in the cytoskeleton. It localises to the microtubule organizing center. The protein localises to the centrosome. The protein resides in the chromosome. Its subcellular location is the centromere. It is found in the kinetochore. It localises to the nucleus. The protein localises to the spindle pole. Required for the localization of dynein and dynactin to the mitotic kintochore. Dynein is believed to control the initial lateral interaction between the kinetochore and spindle microtubules and to facilitate the subsequent formation of end-on kinetochore-microtubule attachments mediated by the NDC80 complex. Also required for correct spindle orientation. Does not appear to be required for the removal of spindle assembly checkpoint (SAC) proteins from the kinetochore upon bipolar spindle attachment. Acts as an adapter protein linking the dynein motor complex to various cargos and converts dynein from a non-processive to a highly processive motor in the presence of dynactin. Facilitates the interaction between dynein and dynactin and activates dynein processivity (the ability to move along a microtubule for a long distance without falling off the track). Plays a role in cell migration. This chain is Protein Spindly (Spdl1), found in Mus musculus (Mouse).